Here is a 98-residue protein sequence, read N- to C-terminus: uncharacterized protein (98 aa).

One can recognise an STAS domain in the interval 1–85 (MLETVPVRCV…GTLKQALENM (85 aa)).

Post-translationally, phosphorylated on threonine residue(s). Phosphorylated by PrkC and dephosphorylated by PrpC.

The protein localises to the cytoplasm. This is an uncharacterized protein from Bacillus subtilis (strain 168).